A 776-amino-acid polypeptide reads, in one-letter code: Mitochondrial intermediate peptidase (776 aa).

The N-terminal 28 residues, 1 to 28 (MFVRFYKRLDRQYIQSQRRWILSSNKCL), are a transit peptide targeting the mitochondrion. The disordered stretch occupies residues 48–71 (DHWEESQAQNTSSEQDNKGKNSSY). Residues 53–71 (SQAQNTSSEQDNKGKNSSY) are compositionally biased toward polar residues. His567 is a binding site for Zn(2+). Residue Glu568 is part of the active site. His571 and His574 together coordinate Zn(2+).

Belongs to the peptidase M3 family. The cofactor is Zn(2+).

Its subcellular location is the mitochondrion matrix. It catalyses the reaction Release of an N-terminal octapeptide as second stage of processing of some proteins imported into the mitochondrion.. Cleaves proteins, imported into the mitochondrion, to their mature size. While most mitochondrial precursor proteins are processed to the mature form in one step by mitochondrial processing peptidase (MPP), the sequential cleavage by MIP of an octapeptide after initial processing by MPP is a required step for a subgroup of nuclear-encoded precursor proteins destined for the matrix or the inner membrane. The polypeptide is Mitochondrial intermediate peptidase (OCT1) (Eremothecium gossypii (strain ATCC 10895 / CBS 109.51 / FGSC 9923 / NRRL Y-1056) (Yeast)).